Here is a 141-residue protein sequence, read N- to C-terminus: ATP synthase epsilon chain (141 aa).

The protein belongs to the ATPase epsilon chain family. F-type ATPases have 2 components, CF(1) - the catalytic core - and CF(0) - the membrane proton channel. CF(1) has five subunits: alpha(3), beta(3), gamma(1), delta(1), epsilon(1). CF(0) has three main subunits: a, b and c.

The protein resides in the cell inner membrane. Functionally, produces ATP from ADP in the presence of a proton gradient across the membrane. The sequence is that of ATP synthase epsilon chain from Desulfatibacillum aliphaticivorans.